The following is a 143-amino-acid chain: Large ribosomal subunit protein uL13 (143 aa).

It belongs to the universal ribosomal protein uL13 family. In terms of assembly, part of the 50S ribosomal subunit.

In terms of biological role, this protein is one of the early assembly proteins of the 50S ribosomal subunit, although it is not seen to bind rRNA by itself. It is important during the early stages of 50S assembly. This chain is Large ribosomal subunit protein uL13, found in Prochlorococcus marinus (strain MIT 9312).